The primary structure comprises 261 residues: 5'-nucleotidase SurE (261 aa).

Asp8, Asp9, Ser43, and Asn96 together coordinate a divalent metal cation.

It belongs to the SurE nucleotidase family. It depends on a divalent metal cation as a cofactor.

It is found in the cytoplasm. The enzyme catalyses a ribonucleoside 5'-phosphate + H2O = a ribonucleoside + phosphate. Functionally, nucleotidase that shows phosphatase activity on nucleoside 5'-monophosphates. This is 5'-nucleotidase SurE from Cereibacter sphaeroides (strain KD131 / KCTC 12085) (Rhodobacter sphaeroides).